A 678-amino-acid polypeptide reads, in one-letter code: Pescadillo homolog (678 aa).

Acidic residues predominate over residues 283–303 (EEEEPEEVDSEAGDEDDDDLP). The interval 283–316 (EEEEPEEVDSEAGDEDDDDLPVLDSGTRRRRAAA) is disordered. The BRCT domain maps to 361-451 (VCGSLFRGRV…VLMPTDLYAP (91 aa)). The stretch at 552-587 (MTRKARKMYNNMKQKEAAKQERVQQLESKKAKLAAT) forms a coiled coil. A disordered region spans residues 563 to 678 (MKQKEAAKQE…DAAPAKRQRR (116 aa)). Residues 564-581 (KQKEAAKQERVQQLESKK) are compositionally biased toward basic and acidic residues. Low complexity-rich tracts occupy residues 597-618 (KPAA…VAAS) and 630-661 (APAP…AAKE). Positions 662–672 (APAKGGKDAAP) are enriched in basic and acidic residues.

It belongs to the pescadillo family.

The protein resides in the nucleus. The protein localises to the nucleolus. It localises to the nucleoplasm. Required for maturation of ribosomal RNAs and formation of the large ribosomal subunit. This is Pescadillo homolog from Chlamydomonas reinhardtii (Chlamydomonas smithii).